A 260-amino-acid chain; its full sequence is 3-deoxy-manno-octulosonate cytidylyltransferase (260 aa).

The protein belongs to the KdsB family.

It is found in the cytoplasm. The catalysed reaction is 3-deoxy-alpha-D-manno-oct-2-ulosonate + CTP = CMP-3-deoxy-beta-D-manno-octulosonate + diphosphate. The protein operates within nucleotide-sugar biosynthesis; CMP-3-deoxy-D-manno-octulosonate biosynthesis; CMP-3-deoxy-D-manno-octulosonate from 3-deoxy-D-manno-octulosonate and CTP: step 1/1. It participates in bacterial outer membrane biogenesis; lipopolysaccharide biosynthesis. Its function is as follows. Activates KDO (a required 8-carbon sugar) for incorporation into bacterial lipopolysaccharide in Gram-negative bacteria. The polypeptide is 3-deoxy-manno-octulosonate cytidylyltransferase (Polaromonas naphthalenivorans (strain CJ2)).